A 453-amino-acid chain; its full sequence is UDP-N-acetylmuramoylalanine--D-glutamate ligase (453 aa).

Residue 115–121 (GTNGKTT) coordinates ATP.

Belongs to the MurCDEF family.

The protein resides in the cytoplasm. It carries out the reaction UDP-N-acetyl-alpha-D-muramoyl-L-alanine + D-glutamate + ATP = UDP-N-acetyl-alpha-D-muramoyl-L-alanyl-D-glutamate + ADP + phosphate + H(+). It functions in the pathway cell wall biogenesis; peptidoglycan biosynthesis. Cell wall formation. Catalyzes the addition of glutamate to the nucleotide precursor UDP-N-acetylmuramoyl-L-alanine (UMA). The protein is UDP-N-acetylmuramoylalanine--D-glutamate ligase of Geotalea daltonii (strain DSM 22248 / JCM 15807 / FRC-32) (Geobacter daltonii).